The following is a 138-amino-acid chain: MSLTVRVIAADKTVWDSAAEEVILPSTTGQLGILSGHAPLLSALDVGVMRVRPGKDWVSIALMGGFVEVENDEVVILVNGAERGDTIDREEARSTLSAAQARLDQSEQSEDKQERYEAQRDFKRARARLQASGEVVNI.

The tract at residues 88–119 (DREEARSTLSAAQARLDQSEQSEDKQERYEAQ) is disordered. Over residues 109–119 (SEDKQERYEAQ) the composition is skewed to basic and acidic residues.

The protein belongs to the ATPase epsilon chain family. In terms of assembly, F-type ATPases have 2 components, CF(1) - the catalytic core - and CF(0) - the membrane proton channel. CF(1) has five subunits: alpha(3), beta(3), gamma(1), delta(1), epsilon(1). CF(0) has three main subunits: a, b and c.

It is found in the cellular thylakoid membrane. Functionally, produces ATP from ADP in the presence of a proton gradient across the membrane. In Acaryochloris marina (strain MBIC 11017), this protein is ATP synthase epsilon chain.